The chain runs to 410 residues: Maintenance of mitochondrial morphology protein 1 (410 aa).

Over 1 to 19 (MTPDSCPVRPEPTLSFTQG) the chain is Lumenal. The chain crosses the membrane as a helical span at residues 20–40 (LIVGQISVVFLIAAFIKFFIF). The Cytoplasmic segment spans residues 41 to 410 (GDPPSAEETA…PMPGSLAVDD (370 aa)). Over residues 71-87 (LRTSNQRPGSQQQQSVL) the composition is skewed to polar residues. Residues 71-98 (LRTSNQRPGSQQQQSVLNRKKSSILRSG) are disordered. One can recognise an SMP-LTD domain in the interval 119-335 (QPESLDWFNV…EPRFQEIPLP (217 aa)). The segment at 380 to 410 (ARQAAQRDSLRYRRPRADDAFPMPGSLAVDD) is disordered. Over residues 387-398 (DSLRYRRPRADD) the composition is skewed to basic and acidic residues.

This sequence belongs to the MMM1 family. In terms of assembly, homodimer. Component of the ER-mitochondria encounter structure (ERMES) or MDM complex, composed of MMM1, MDM10, MDM12 and MDM34. An MMM1 homodimer associates with one molecule of MDM12 on each side in a pairwise head-to-tail manner, and the SMP-LTD domains of MMM1 and MDM12 generate a continuous hydrophobic tunnel for phospholipid trafficking.

It is found in the endoplasmic reticulum membrane. Component of the ERMES/MDM complex, which serves as a molecular tether to connect the endoplasmic reticulum (ER) and mitochondria. Components of this complex are involved in the control of mitochondrial shape and protein biogenesis, and function in nonvesicular lipid trafficking between the ER and mitochondria. The MDM12-MMM1 subcomplex functions in the major beta-barrel assembly pathway that is responsible for biogenesis of all outer membrane beta-barrel proteins, and acts in a late step after the SAM complex. The MDM10-MDM12-MMM1 subcomplex further acts in the TOM40-specific pathway after the action of the MDM12-MMM1 complex. Essential for establishing and maintaining the structure of mitochondria and maintenance of mtDNA nucleoids. This Pyricularia oryzae (strain 70-15 / ATCC MYA-4617 / FGSC 8958) (Rice blast fungus) protein is Maintenance of mitochondrial morphology protein 1.